Consider the following 280-residue polypeptide: Type 1 encapsulin shell protein (280 aa).

This sequence belongs to the encapsulin family. Family 1 subfamily. In terms of assembly, this encapsulin nanocompartment is formed by 60 subunits; monomers form pentamers which assemble to form shells. There are 12 pores where the pentamers meet as well as 3-fold axis channels and dimer channels; none are larger than 3-4 Angstroms in diameter. The N-terminus of the protein is inside the shell, the C-terminus is outside.

It localises to the encapsulin nanocompartment. Shell component of a type 1 encapsulin nanocompartment. Assembles into proteinaceous icosahedral shells 24 nm in diameter in the presence and absence of its ferritin cargo protein. The center of cargo-loaded nanocompartments is loaded with iron. The empty encapsulin nanocompartment sequesters about 2200 Fe ions while the cargo-loaded nanocompartment can maximally sequester about 4150 Fe ions. Does not have any detectable ferroxidase activity. This is Type 1 encapsulin shell protein from Rhodospirillum rubrum (strain ATCC 11170 / ATH 1.1.1 / DSM 467 / LMG 4362 / NCIMB 8255 / S1).